The primary structure comprises 586 residues: Aspartate--tRNA ligase (586 aa).

Glutamate 171 contributes to the L-aspartate binding site. The tract at residues 195-198 (QLFK) is aspartate. Arginine 217 provides a ligand contact to L-aspartate. Residues 217-219 (RDE) and glutamine 226 contribute to the ATP site. Histidine 448 is a binding site for L-aspartate. Glutamate 482 is a binding site for ATP. Arginine 489 serves as a coordination point for L-aspartate. 534-537 (GLDR) lines the ATP pocket.

Belongs to the class-II aminoacyl-tRNA synthetase family. Type 1 subfamily. As to quaternary structure, homodimer.

Its subcellular location is the cytoplasm. It carries out the reaction tRNA(Asp) + L-aspartate + ATP = L-aspartyl-tRNA(Asp) + AMP + diphosphate. Catalyzes the attachment of L-aspartate to tRNA(Asp) in a two-step reaction: L-aspartate is first activated by ATP to form Asp-AMP and then transferred to the acceptor end of tRNA(Asp). This is Aspartate--tRNA ligase from Buchnera aphidicola subsp. Acyrthosiphon pisum (strain APS) (Acyrthosiphon pisum symbiotic bacterium).